A 124-amino-acid polypeptide reads, in one-letter code: Biogenesis of lysosome-related organelles complex 1 subunit CNL1 (124 aa).

The interval 1-20 is disordered; that stretch reads MMSENITAVEPQENNDVEAD. Residues 75 to 98 are a coiled coil; that stretch reads IGMAKDLLQKCDDLEKHYDQLDAV.

This sequence belongs to the BLOC1S4 family. As to quaternary structure, component of the biogenesis of lysosome-related organelles complex-1 (BLOC-1).

Its subcellular location is the cytoplasm. In terms of biological role, component of the biogenesis of lysosome-related organelles complex-1 (BLOC-1), a complex that is involved in endosomal cargo sorting. This is Biogenesis of lysosome-related organelles complex 1 subunit CNL1 (CLN1) from Kluyveromyces lactis (strain ATCC 8585 / CBS 2359 / DSM 70799 / NBRC 1267 / NRRL Y-1140 / WM37) (Yeast).